The following is a 194-amino-acid chain: Mitochondrial import inner membrane translocase subunit Tim22 (194 aa).

2 disulfide bridges follow: cysteine 69/cysteine 141 and cysteine 160/cysteine 179. A run of 3 helical transmembrane segments spans residues 74 to 94 (ALAC…TAGI), 123 to 143 (MSYA…ECLI), and 170 to 190 (AGLK…AAID).

The protein belongs to the Tim17/Tim22/Tim23 family. In terms of assembly, component of the TIM22 complex, whose core is composed of TIMM22, associated with peripheral protein FXC1/TIMM10B and the 70 kDa heterohexamer. In most cases, the 70 kDa complex is composed of TIMM9 and TIMM10 (TIMM10A or TIMM10B). A small fraction of the 70 kDa complex is composed of TIMM8 (TIMM8A/DDP1 or TIMM8B/DDP2) and TIMM13. The TIM22 complex also contains AGK and TIMM29. Interacts directly with TIMM9, TIMM10A and FXC1/TIMM10B. Interacts (when oxidized) with TIMM29; interaction is direct. In terms of processing, disulfide bonds promote efficient assembly of the TIM22 complex.

It is found in the mitochondrion inner membrane. Essential core component of the TIM22 complex, a complex that mediates the import and insertion of multi-pass transmembrane proteins into the mitochondrial inner membrane. In the TIM22 complex, it constitutes the voltage-activated and signal-gated channel. Forms a twin-pore translocase that uses the membrane potential as external driving force in 2 voltage-dependent steps. In Homo sapiens (Human), this protein is Mitochondrial import inner membrane translocase subunit Tim22 (TIMM22).